Consider the following 425-residue polypeptide: Formyl-CoA:oxalate CoA-transferase (425 aa).

Residues 17 to 18, arginine 38, 72 to 75, 96 to 98, arginine 104, and 136 to 139 each bind CoA; these read QS, LDTK, NFG, and KVYE. The active-site Nucleophile is aspartate 168. Residue 247–249 coordinates substrate; the sequence is GGQ.

This sequence belongs to the CoA-transferase III family. Frc subfamily. Homodimer.

It carries out the reaction formyl-CoA + oxalate = oxalyl-CoA + formate. Its pathway is metabolic intermediate degradation; oxalate degradation; CO(2) and formate from oxalate: step 1/2. Its function is as follows. Involved in the catabolism of oxalate and in the adapatation to low pH via the induction of the oxalate-dependent acid tolerance response (ATR). Catalyzes the transfer of the CoA moiety from formyl-CoA to oxalate. The protein is Formyl-CoA:oxalate CoA-transferase of Rhodopseudomonas palustris (strain ATCC BAA-98 / CGA009).